Consider the following 357-residue polypeptide: MELWQTFVKMVHALVPWLDGTVAIILIIFIKAIALLIPLMLVVAYFTYAERKVIGYMQLRIGPNRVGPKGWLQPIADALKLMTKEIIFPTKANIYLFLLAPVLAIAPAIAVWAVIPFDESIYITNLDISLLYVLAIGSIGVYGIILAGWASNSKYPLLGALRSAALLVSYEIVIGFALVTVVMIAGSVNLNTIVQAQQGGIIYWYFIPLFPIMIIFFISSLVETNRAPFDVVEGESEIVGGTHVEYSGMTFAVFFLAEYANMILMAVLSVIMFFGGWHSPFEAIPYLESVFSWIPGMIWLLAKTTFFMFLYLWVRATFPRFRYDQIMHLSWKVFLPITIIWIFVVALMTQLQLSPWF.

The next 8 helical transmembrane spans lie at 22–42 (VAII…LMLV), 94–114 (IYLF…VWAV), 130–150 (LLYV…AGWA), 164–184 (AALL…VVMI), 199–219 (GGII…FFIS), 254–274 (FFLA…IMFF), 294–314 (IPGM…YLWV), and 333–353 (VFLP…QLQL).

The protein belongs to the complex I subunit 1 family. NDH-1 is composed of 14 different subunits. Subunits NuoA, H, J, K, L, M, N constitute the membrane sector of the complex.

The protein resides in the cell inner membrane. The enzyme catalyses a quinone + NADH + 5 H(+)(in) = a quinol + NAD(+) + 4 H(+)(out). Its function is as follows. NDH-1 shuttles electrons from NADH, via FMN and iron-sulfur (Fe-S) centers, to quinones in the respiratory chain. The immediate electron acceptor for the enzyme in this species is believed to be ubiquinone. Couples the redox reaction to proton translocation (for every two electrons transferred, four hydrogen ions are translocated across the cytoplasmic membrane), and thus conserves the redox energy in a proton gradient. This subunit may bind ubiquinone. In Vesicomyosocius okutanii subsp. Calyptogena okutanii (strain HA), this protein is NADH-quinone oxidoreductase subunit H.